A 577-amino-acid chain; its full sequence is MRASRYLIATQKETPSDAEIISHQLMLRAGMIRKLAAGLYTWLPLGLRTLRKVERIVREEMDKSGAQEVLMPAVQPAELWQESGRWEQYGGELLRLNDRHGRDFCFGPTHEEVITDLIRNELKSYKELPANFYQIQTKFRDERRPRFGVMRAREFIMKDAYSFHLNAESLDETYKVMHQTYCNIFDRLGLDYRPVQADSGSIGGSSSHEFHVLASSGEDAIVFSTSGDYAANIEKAEAVAPAGERPAPGEELKEVHTPGQRTIDAVSQFLGMPAERSVKTLLVKAEADENGESGLVALILRGDHTLNEIKAENLPGIAEPLTMATDEEIEKAIGCKPGSIGPVKLPVPVIVDRSAAHLADFVCGANKDDYHLTGVNWGRDAEISRVEDLRNVVEGDASPDGNGTLEIRRGIEVGHIFKLGNKYSKAMNASVLDEHGKTSIMEMGCYGIGVSRIVAASIEQNHDEKGIIWPDAIAPFEVAIVTLNGHKSPVVAEAGDKLYEQLRQAGYDVLLDDRNERPGVKFADIELIGIPHRFVVSERGLSAGTLEYKGRRDEEKQDIPVDEALSFLVKASPKGGL.

It belongs to the class-II aminoacyl-tRNA synthetase family. ProS type 1 subfamily. In terms of assembly, homodimer.

It localises to the cytoplasm. The enzyme catalyses tRNA(Pro) + L-proline + ATP = L-prolyl-tRNA(Pro) + AMP + diphosphate. Functionally, catalyzes the attachment of proline to tRNA(Pro) in a two-step reaction: proline is first activated by ATP to form Pro-AMP and then transferred to the acceptor end of tRNA(Pro). As ProRS can inadvertently accommodate and process non-cognate amino acids such as alanine and cysteine, to avoid such errors it has two additional distinct editing activities against alanine. One activity is designated as 'pretransfer' editing and involves the tRNA(Pro)-independent hydrolysis of activated Ala-AMP. The other activity is designated 'posttransfer' editing and involves deacylation of mischarged Ala-tRNA(Pro). The misacylated Cys-tRNA(Pro) is not edited by ProRS. This is Proline--tRNA ligase from Marinobacter nauticus (strain ATCC 700491 / DSM 11845 / VT8) (Marinobacter aquaeolei).